A 342-amino-acid chain; its full sequence is tRNA N6-adenosine threonylcarbamoyltransferase (342 aa).

Residues His-114 and His-118 each coordinate Fe cation. Substrate contacts are provided by residues 136–140 (LVSGG), Asp-169, Gly-182, Asp-186, and Asn-275. Asp-301 is a Fe cation binding site.

This sequence belongs to the KAE1 / TsaD family. Fe(2+) is required as a cofactor.

Its subcellular location is the cytoplasm. The catalysed reaction is L-threonylcarbamoyladenylate + adenosine(37) in tRNA = N(6)-L-threonylcarbamoyladenosine(37) in tRNA + AMP + H(+). Its function is as follows. Required for the formation of a threonylcarbamoyl group on adenosine at position 37 (t(6)A37) in tRNAs that read codons beginning with adenine. Is involved in the transfer of the threonylcarbamoyl moiety of threonylcarbamoyl-AMP (TC-AMP) to the N6 group of A37, together with TsaE and TsaB. TsaD likely plays a direct catalytic role in this reaction. In Streptococcus pyogenes serotype M3 (strain ATCC BAA-595 / MGAS315), this protein is tRNA N6-adenosine threonylcarbamoyltransferase.